The following is a 226-amino-acid chain: ATP synthase F(0) complex subunit a (226 aa).

6 helical membrane passes run 6 to 26 (FASFITPTMMGLPIVVTIIMF), 68 to 88 (WALMIVSLIMFIGSTNLLGLL), 97 to 117 (QLSMNLSMAIPLWAGAVILGF), 138 to 158 (IPMLIIIETISLFIQPMALAV), 164 to 184 (ITAGHLLMHLIGGATLVLMDI), and 189 to 209 (ATITFIILLLLTVLEFAVALI).

It belongs to the ATPase A chain family. As to quaternary structure, component of the ATP synthase complex composed at least of ATP5F1A/subunit alpha, ATP5F1B/subunit beta, ATP5MC1/subunit c (homooctomer), MT-ATP6/subunit a, MT-ATP8/subunit 8, ATP5ME/subunit e, ATP5MF/subunit f, ATP5MG/subunit g, ATP5MK/subunit k, ATP5MJ/subunit j, ATP5F1C/subunit gamma, ATP5F1D/subunit delta, ATP5F1E/subunit epsilon, ATP5PF/subunit F6, ATP5PB/subunit b, ATP5PD/subunit d, ATP5PO/subunit OSCP. ATP synthase complex consists of a soluble F(1) head domain (subunits alpha(3) and beta(3)) - the catalytic core - and a membrane F(0) domain - the membrane proton channel (subunits c, a, 8, e, f, g, k and j). These two domains are linked by a central stalk (subunits gamma, delta, and epsilon) rotating inside the F1 region and a stationary peripheral stalk (subunits F6, b, d, and OSCP). Interacts with DNAJC30; interaction is direct.

Its subcellular location is the mitochondrion inner membrane. The enzyme catalyses H(+)(in) = H(+)(out). Its function is as follows. Subunit a, of the mitochondrial membrane ATP synthase complex (F(1)F(0) ATP synthase or Complex V) that produces ATP from ADP in the presence of a proton gradient across the membrane which is generated by electron transport complexes of the respiratory chain. ATP synthase complex consist of a soluble F(1) head domain - the catalytic core - and a membrane F(1) domain - the membrane proton channel. These two domains are linked by a central stalk rotating inside the F(1) region and a stationary peripheral stalk. During catalysis, ATP synthesis in the catalytic domain of F(1) is coupled via a rotary mechanism of the central stalk subunits to proton translocation. With the subunit c (ATP5MC1), forms the proton-conducting channel in the F(0) domain, that contains two crucial half-channels (inlet and outlet) that facilitate proton movement from the mitochondrial intermembrane space (IMS) into the matrix. Protons are taken up via the inlet half-channel and released through the outlet half-channel, following a Grotthuss mechanism. This is ATP synthase F(0) complex subunit a from Rattus norvegicus (Rat).